The chain runs to 49 residues: Delta-actitoxin-Axm1h (49 aa).

Intrachain disulfides connect C4/C46, C6/C36, and C29/C47.

This sequence belongs to the sea anemone sodium channel inhibitory toxin family. Type I subfamily.

It localises to the secreted. It is found in the nematocyst. Binds specifically to voltage-gated sodium channels (Nav) (site 3), thereby delaying their inactivation during signal transduction. Thus it may strongly stimulate mammalian cardiac muscle contraction. In Anthopleura xanthogrammica (Giant green sea anemone), this protein is Delta-actitoxin-Axm1h.